Here is a 568-residue protein sequence, read N- to C-terminus: Hemagglutinin-neuraminidase (568 aa).

The Intravirion portion of the chain corresponds to 1 to 18 (MSGAEGNTNKRTFRAVFR). The helical transmembrane segment at 19 to 39 (TLIILITLTILALSAAILYEV) threads the bilayer. The Virion surface segment spans residues 40–568 (THTSNGSESN…VPFLREVIIT (529 aa)). Residues N44 and N111 are each glycosylated (N-linked (GlcNAc...) asparagine; by host). 3 disulfides stabilise this stretch: C162–C186, C176–C237, and C228–C241. The involved in neuraminidase activity stretch occupies residues 224-229 (NRKSCS). 2 N-linked (GlcNAc...) asparagine; by host glycosylation sites follow: N268 and N280. 3 disulfide bridges follow: C334–C455, C366–C376, and C449–C459. The N-linked (GlcNAc...) asparagine; by host glycan is linked to N382. An N-linked (GlcNAc...) asparagine; by host glycan is attached at N513. C531 and C542 are disulfide-bonded.

It belongs to the paramyxoviruses hemagglutinin-neuraminidase family. As to quaternary structure, homotetramer; composed of disulfide-linked homodimers.

It localises to the virion membrane. The protein resides in the host cell membrane. The enzyme catalyses Hydrolysis of alpha-(2-&gt;3)-, alpha-(2-&gt;6)-, alpha-(2-&gt;8)- glycosidic linkages of terminal sialic acid residues in oligosaccharides, glycoproteins, glycolipids, colominic acid and synthetic substrates.. In terms of biological role, attaches the virus to sialic acid-containing cell receptors and thereby initiating infection. Binding of HN protein to the receptor induces a conformational change that allows the F protein to trigger virion/cell membranes fusion. Its function is as follows. Neuraminidase activity ensures the efficient spread of the virus by dissociating the mature virions from the neuraminic acid containing glycoproteins. The sequence is that of Hemagglutinin-neuraminidase (HN) from Simiiformes (SV41).